The primary structure comprises 728 residues: MKRGSKRESGGPLTEEPEPLFSEENRSLQDGNPLDESDSEESQYSGLEDSGTDSSDDEEDHSSEEVQDPGKSPKEIIKVPHRTSKSQADSPADEEDQPNEIKEYENDSSDEEDIRNTVGNIPMEWYKDLPHIGYDLDGRKIFKPLRSKDQLEEFLDKMENPDYWRTVHDKKTGQDIKLTDEQVDLVERLQKGQFGDLNYDPYQPAIDFFTHETMIHPVTNRPADKRSFIPSLIEKEKVSKLVHAIKMGWIQPRKPRDDAPTYYDLWAKEDPNAILGRHKMHVPAPKLPLPGHEQSYNPPPEYLMSEEERLAWEQQDPEDRKLPFLPQRFNCLRAVPGYARFIHERFERCLDLYLCPRQRKMRVNVDPEDLIPKLPKPRDLQPFPTIQSMIYKGHKDLVRCISVSPSGQWLVSGSDDCSVRFWEVSTGRCMKSVVLEGAVKSISWNPNPVLVLVAACVDRSVVLINPGLGDRLLCSATDQHISGYQPPEEEVQQPVTWEEAEGSEYSSGLRLWIKHQKEVKQVTFHARGDYFAVVLPDNGNSQVLIHQLSRRRSQNPFRKNKGQVQKVLFHPTRPFFFVATQRYVRVYNLLKQELTKKLLTNCKWVSSIAVHPAGDNLICGSYDSKLAWFDMDLSTKPYKVLRHHKKALRAVSFHKSYPLFASGSDDASVIVCHGMVYNDLLQNPLIVPVKVLRGHAIHRDLGVLDVMFHPTQPWVFSSGADGTIRLFT.

The tract at residues 1-114 (MKRGSKRESG…ENDSSDEEDI (114 aa)) is disordered. The segment covering 50 to 67 (SGTDSSDDEEDHSSEEVQ) has biased composition (acidic residues). 7 WD repeats span residues 393–432 (GHKD…CMKS), 434–474 (VLEG…RLLC), 514–556 (KHQK…SQNP), 559–597 (KNKG…LTKK), 600–639 (TNCK…KPYK), 643–682 (HHKK…DLLQ), and 698–728 (HRDL…RLFT).

This sequence belongs to the WD repeat BOP1/ERB1 family. In terms of assembly, component of the PeBoW complex, composed of bop1, pes1 and wdr12. The complex is held together by bop1, which interacts with pes1 via its N-terminal domain and with wdr12 via a high-affinity interaction between the seven-bladed beta-propeller domains of the 2 proteins. The PeBoW complex associates with the 66S pre-ribosome.

It is found in the nucleus. The protein resides in the nucleolus. Its subcellular location is the nucleoplasm. In terms of biological role, component of the PeBoW complex, which is required for maturation of 28S and 5.8S ribosomal RNAs and formation of the 60S ribosome. The chain is Ribosome biogenesis protein bop1-B (bop1-b) from Xenopus laevis (African clawed frog).